Consider the following 241-residue polypeptide: Probable transcriptional regulatory protein str0195 (241 aa).

It belongs to the TACO1 family. YeeN subfamily.

The protein localises to the cytoplasm. The chain is Probable transcriptional regulatory protein str0195 from Streptococcus thermophilus (strain CNRZ 1066).